Here is a 395-residue protein sequence, read N- to C-terminus: MNNAEWANKDYYADLGVSKNASAEDIKKAYRKLARENHPDKNPGDKVAEDRFKKAAEAYDVVGDETKRREYDDLKKLLASGGIRGGFGSGGADFPGGFRSTQGFDASDLFGGAGPGGGFSADGGLGDIFGGIFNRGSSPRQSARPTRGADVETDITLEFREAAKGTTIPVELTGEAPCNTCHGSGSASGQPSKCGQCNGSGFTSENKGAFGFSAPCTNCGGTGEVITDPCVDCRGRGTVRRTRSITVRIPAGVEDGQKVRLAGQGEAGPNGKPAGDLFVRVHVKEDPVFEREGNNIHVTVPVSFSELALGGAISVPTLDKPVKLKLAPGTPDGRTLRVRGRGVETRTAKGDLMVTVQVTVPPTLSDEAAEALRTYAEAEKKSGFDPRANWAGNNR.

The region spanning 10–75 is the J domain; sequence DYYADLGVSK…TKRREYDDLK (66 aa). The segment at 165-242 adopts a CR-type zinc-finger fold; it reads GTTIPVELTG…CRGRGTVRRT (78 aa). Zn(2+) contacts are provided by Cys-178, Cys-181, Cys-194, Cys-197, Cys-216, Cys-219, Cys-230, and Cys-233. CXXCXGXG motif repeat units lie at residues 178–185, 194–201, 216–223, and 230–237; these read CNTCHGSG, CGQCNGSG, CTNCGGTG, and CVDCRGRG.

Belongs to the DnaJ family. Homodimer. Zn(2+) is required as a cofactor.

It localises to the cytoplasm. Participates actively in the response to hyperosmotic and heat shock by preventing the aggregation of stress-denatured proteins and by disaggregating proteins, also in an autonomous, DnaK-independent fashion. Unfolded proteins bind initially to DnaJ; upon interaction with the DnaJ-bound protein, DnaK hydrolyzes its bound ATP, resulting in the formation of a stable complex. GrpE releases ADP from DnaK; ATP binding to DnaK triggers the release of the substrate protein, thus completing the reaction cycle. Several rounds of ATP-dependent interactions between DnaJ, DnaK and GrpE are required for fully efficient folding. Also involved, together with DnaK and GrpE, in the DNA replication of plasmids through activation of initiation proteins. In Corynebacterium efficiens (strain DSM 44549 / YS-314 / AJ 12310 / JCM 11189 / NBRC 100395), this protein is Chaperone protein DnaJ 2.